Consider the following 88-residue polypeptide: Apolipoprotein C-I (88 aa).

A signal peptide spans 1 to 26 (MRLFIALPVLIVVVAMALEGPAPAQA).

This sequence belongs to the apolipoprotein C1 family.

It is found in the secreted. Inhibitor of lipoprotein binding to the low density lipoprotein (LDL) receptor, LDL receptor-related protein, and very low density lipoprotein (VLDL) receptor. Associates with high density lipoproteins (HDL) and the triacylglycerol-rich lipoproteins in the plasma and makes up about 10% of the protein of the VLDL and 2% of that of HDL. Appears to interfere directly with fatty acid uptake and is also the major plasma inhibitor of cholesteryl ester transfer protein (CETP). Binds free fatty acids and reduces their intracellular esterification. Modulates the interaction of APOE with beta-migrating VLDL and inhibits binding of beta-VLDL to the LDL receptor-related protein. The polypeptide is Apolipoprotein C-I (Apoc1) (Rattus norvegicus (Rat)).